A 103-amino-acid polypeptide reads, in one-letter code: MSDRHMSSIFPECDHLKQIYDKCFTEFFQKFITPNYRHQYAVNPCERLHDVYKRCVEERLATQRPFEIDLDEIRKEYLNTDDDKLKDRQNNQKTNSENKCSSS.

Residues 10–63 form the CHCH domain; the sequence is FPECDHLKQIYDKCFTEFFQKFITPNYRHQYAVNPCERLHDVYKRCVEERLATQ. 2 consecutive short sequence motifs (cx9C motif) follow at residues 13–23 and 45–55; these read CDHLKQIYDKC and CERLHDVYKRC. Disulfide bonds link Cys-13/Cys-55 and Cys-23/Cys-45. Positions 80–90 are enriched in basic and acidic residues; it reads TDDDKLKDRQN. The disordered stretch occupies residues 80-103; sequence TDDDKLKDRQNNQKTNSENKCSSS. Polar residues predominate over residues 91-103; it reads NQKTNSENKCSSS.

Belongs to the TRIAP1/MDM35 family.

This is an uncharacterized protein from Caenorhabditis elegans.